The chain runs to 287 residues: MRFIHALLLAGIAHSAYASEKLTFKTDLEKLEREKAAQIGVAIVDPQGEIVAGHRMAQRFAMCSTFKFPLAALVFERIDSGTERGDRKLSYGPDMIVEWSPATERFLASGHMTVLEAAQAAVQLSDNGATNLLLREIGGPAAMTQYFRKIGDSVSRLDRKEPEMNDNTPGDLRDTTTPIAMARTVAKVLYGGALTSTSTHTIERWLIGNQTGDATLRAGFPKDWVVGEKTGTCANGGRNDIGFFKAQERDYAVAVYTTAPKLSAVERDELVASVGQVITQLILSTDK.

Positions 1–18 (MRFIHALLLAGIAHSAYA) are cleaved as a signal peptide. Cysteine 63 and cysteine 233 are oxidised to a cystine. The Nucleophile; acyl-ester intermediate role is filled by serine 64. A beta-lactam-binding residues include lysine 67, serine 125, and glutamate 161.

The protein belongs to the class-A beta-lactamase family.

The enzyme catalyses a beta-lactam + H2O = a substituted beta-amino acid. With respect to regulation, inhibited by the beta-lactamase-blocking agents clavulanic acid, sulbactam and tazobactam. Functionally, extended-spectrum beta-lactamase (ESBL) which confers resistance to penicillins, as well as first, third and fourth-generation cephalosporins. Has modest carbapenem-hydrolyzing activity. Has cefotaxime-hydrolyzing activity. This chain is Beta-lactamase GES-2, found in Pseudomonas aeruginosa.